The sequence spans 1923 residues: Nuclear pore complex protein GP210 (1923 aa).

A signal peptide spans 1-22 (MVPVSFCFFFLLLLLSAGESSS). N-linked (GlcNAc...) asparagine glycosylation is found at N73, N117, N289, N609, N863, N903, N967, N982, N1171, N1199, N1550, N1568, and N1743. One can recognise a BIG2 domain in the interval 1152-1205 (IFLVPGASYVLTIEGGPTMNVSVDYTTVDNEVAKIEKSGRLYATSPGNTTIYAT). Residues 1829-1849 (SVLLKILWGVLVLVVSVIILM) traverse the membrane as a helical segment.

The protein belongs to the NUP210 family. Part of the nuclear pore complex (NPC). The NPC has an eight-fold symmetrical structure comprising a central transport channel and two rings, the cytoplasmic and nuclear rings, to which eight filaments are attached. The cytoplasmic filaments have loose ends, while the nuclear filaments are joined in a distal ring, forming a nuclear basket. NPCs are highly dynamic in configuration and composition, and can be devided in 3 subcomplexes, the NUP62 subcomplex, the NUP107-160 subcomplex and the NUP93 subcomplex, containing approximately 30 different nucleoporin proteins.

The protein resides in the nucleus envelope. The protein localises to the nucleus membrane. It localises to the nucleus. It is found in the nuclear pore complex. The polypeptide is Nuclear pore complex protein GP210 (Arabidopsis thaliana (Mouse-ear cress)).